A 450-amino-acid chain; its full sequence is Cysteine proteinase (450 aa).

An N-terminal signal peptide occupies residues 1–20 (MPRTEMVRFVRLPVVLLAMA). The propeptide at 21–125 (ACLASVALGS…RKTVNVTTGR (105 aa)) is activation peptide. Asn-120 is a glycosylation site (N-linked (GlcNAc...) asparagine). Cys-147 and Cys-188 are oxidised to a cystine. Residues Cys-150, His-287, and Asn-307 contribute to the active site. Residues 343-450 (TPPPPPPPPP…TKAARLVPHQ (108 aa)) are 108-residue extension. An N-linked (GlcNAc...) asparagine glycan is attached at Asn-397.

It belongs to the peptidase C1 family.

It is found in the lysosome. Its function is as follows. The cysteine proteinases have a potential role in host-parasite interaction and virulence. In Trypanosoma brucei brucei, this protein is Cysteine proteinase.